The sequence spans 429 residues: Putative chloride channel protein ClcB-like (429 aa).

A run of 11 helical transmembrane segments spans residues 1-21 (MLAI…AFRE), 44-64 (LPWW…GLTL), 146-166 (LLVA…PIAG), 168-188 (VFVC…PLLV), 200-220 (FFGY…GWEV), 221-241 (LTYL…LGLI), 259-279 (LALG…VWGN), 283-303 (VVNG…VLVC), 315-335 (GAVG…GLLY), 354-376 (AVVG…ILMI), and 383-405 (YQVV…ATGA).

This sequence belongs to the chloride channel (TC 2.A.49) family. ClcB subfamily.

It localises to the cell inner membrane. The chain is Putative chloride channel protein ClcB-like from Ralstonia nicotianae (strain ATCC BAA-1114 / GMI1000) (Ralstonia solanacearum).